A 770-amino-acid chain; its full sequence is Penicillin-binding protein 1C (770 aa).

At 1–8 (MPRLLTKR) the chain is on the cytoplasmic side. The helical; Signal-anchor for type II membrane protein transmembrane segment at 9–29 (GCWITLAAAPFLLFLAAWGAD) threads the bilayer. Over 30–770 (KLWPLPLHEV…QIATVKFVMQ (741 aa)) the chain is Periplasmic. A transglycosylase region spans residues 43 to 213 (RVVVAQDGTP…SRLRPDRWPE (171 aa)). The active-site Proton donor; for transglycosylase activity is Glu84. A transpeptidase region spans residues 278 to 559 (AGLQRRLEEL…FASAVPLLNQ (282 aa)). Ser342 serves as the catalytic Acyl-ester intermediate; for transpeptidase activity.

This sequence in the N-terminal section; belongs to the glycosyltransferase 51 family. The protein in the C-terminal section; belongs to the transpeptidase family.

It localises to the cell inner membrane. It catalyses the reaction [GlcNAc-(1-&gt;4)-Mur2Ac(oyl-L-Ala-gamma-D-Glu-L-Lys-D-Ala-D-Ala)](n)-di-trans,octa-cis-undecaprenyl diphosphate + beta-D-GlcNAc-(1-&gt;4)-Mur2Ac(oyl-L-Ala-gamma-D-Glu-L-Lys-D-Ala-D-Ala)-di-trans,octa-cis-undecaprenyl diphosphate = [GlcNAc-(1-&gt;4)-Mur2Ac(oyl-L-Ala-gamma-D-Glu-L-Lys-D-Ala-D-Ala)](n+1)-di-trans,octa-cis-undecaprenyl diphosphate + di-trans,octa-cis-undecaprenyl diphosphate + H(+). It participates in cell wall biogenesis; peptidoglycan biosynthesis. Its activity is regulated as follows. Transglycosylase activity can be inhibited by moenomycin. Its function is as follows. Cell wall formation. The enzyme has a penicillin-insensitive transglycosylase N-terminal domain (formation of linear glycan strands) and a transpeptidase C-terminal domain which may not be functional. The sequence is that of Penicillin-binding protein 1C (pbpC) from Escherichia coli (strain K12).